The chain runs to 770 residues: POU domain, class 2, transcription factor 1 (770 aa).

The span at 1-26 (MNNPSETNKSSMESEDASTGTQTNGL) shows a compositional bias: polar residues. Disordered regions lie at residues 1 to 33 (MNNPSETNKSSMESEDASTGTQTNGLDFQKQPV), 68 to 97 (LNVQSKSSEESGDSQQSSQPSSQPPSVQSA), 262 to 285 (VQTLPQSQSTPKRIDTPSLEEPSD), and 357 to 385 (LSSDSTASSPSALNSPGLGAEGLNRRRKK). Over residues 80–97 (DSQQSSQPSSQPPSVQSA) the composition is skewed to low complexity. Positions 262–272 (VQTLPQSQSTP) are enriched in polar residues. Phosphothreonine occurs at positions 271 and 277. The POU-specific domain maps to 281 to 355 (EEPSDLEELE…LLEKWLNDAE (75 aa)). Serine 284 carries the post-translational modification Phosphoserine. Low complexity predominate over residues 357–372 (LSSDSTASSPSALNSP). Positions 382 to 441 (RRKKRTSIETNIRVALEKSFMENQKPTSEDITLIAEQLNMEKEVIRVWFCNRRQKEKRIN) form a DNA-binding region, homeobox. A phosphoserine mark is found at serine 388 and serine 451. Residues 519–580 (TTTAGTTDST…TNTTQTTSTP (62 aa)) are compositionally biased toward low complexity. Residues 519–589 (TTTAGTTDST…PLPSPLGASQ (71 aa)) form a disordered region.

It belongs to the POU transcription factor family. Class-2 subfamily. In terms of assembly, interacts with POU2AF1; the interaction increases POU2F1 transactivation activity. Interacts with NR3C1, AR, PGR and HCFC1. Post-translationally, phosphorylated by PRKDC. As to expression, ubiquitously expressed. However, isoforms 4 and 5 are only expressed in lymphocytes.

Its subcellular location is the nucleus. Its function is as follows. Transcription factor that binds to the octamer motif (5'-ATTTGCAT-3') and activates the promoters of the genes for some small nuclear RNAs (snRNA) and of genes such as those for histone H2B and immunoglobulins. Modulates transcription transactivation by NR3C1, AR and PGR. This Mus musculus (Mouse) protein is POU domain, class 2, transcription factor 1 (Pou2f1).